An 801-amino-acid polypeptide reads, in one-letter code: PR domain zinc finger protein 4 (801 aa).

Residues 412–529 (KQLVLRQSIV…PENELLFYYS (118 aa)) form the SET domain. The C2H2-type 1; atypical zinc finger occupies 545 to 566 (HLCNCGKECNSYTEFKAHLTSH). 4 C2H2-type zinc fingers span residues 618–640 (HKCDFCSKAFSDPSNLRTHLKIH), 646–668 (YRCTLCDKSFTQKAHLESHMVIH), 674–696 (LKCDYCDKLFMRRQDLKQHVLIH), and 702–724 (IKCPKCDKLFLRTNHLKKHLNSH). The segment at 730–752 (YVCEKCTKAYLTKYHLTRHLKTC) adopts a C2H2-type 6; atypical zinc-finger fold. Residues 751–782 (TCKGPTSSSSAPEEEEEDDSEEEDLADSVGTE) form a disordered region. The span at 762 to 776 (PEEEEEDDSEEEDLA) shows a compositional bias: acidic residues.

This sequence belongs to the class V-like SAM-binding methyltransferase superfamily. In terms of tissue distribution, expressed in many tissues. Highly expressed in ovary, testis, pancreas, brain, heart and prostate.

It is found in the nucleus. May function as a transcription factor involved in cell differentiation. In Homo sapiens (Human), this protein is PR domain zinc finger protein 4 (PRDM4).